The primary structure comprises 440 residues: Glycerate 2-kinase (440 aa).

Residue Lys-58 participates in substrate binding.

It belongs to the glycerate kinase type-1 family. As to quaternary structure, homodimer. Mg(2+) is required as a cofactor. It depends on Ni(2+) as a cofactor. Mn(2+) serves as cofactor. The cofactor is Co(2+).

The enzyme catalyses (R)-glycerate + ATP = (2R)-2-phosphoglycerate + ADP + H(+). Its function is as follows. Catalyzes the ATP-dependent phosphorylation of D-glycerate to 2-phosphoglycerate. It can also utilize GTP, CTP, UTP, ADP or pyrophosphate as phosphate donor. This Pyrococcus horikoshii (strain ATCC 700860 / DSM 12428 / JCM 9974 / NBRC 100139 / OT-3) protein is Glycerate 2-kinase (gck).